The chain runs to 61 residues: Temporin-1Tb (61 aa).

Positions 1–22 are cleaved as a signal peptide; it reads MFTLKKSLLLLFFLGTINLSLC. Residues 23–44 constitute a propeptide that is removed on maturation; the sequence is EEERNAEEERRDEPDERDVQVE. Leucine amide is present on L59.

It belongs to the frog skin active peptide (FSAP) family. Temporin subfamily. In terms of assembly, homo-oligomerizes in membranes as homodimers, homotrimers, or even homotetramers. Oligomerizes in presence of LPS. In Gram-positive bacterial mimetic membranes, the aggregation is weakly pronounced, and penetration proceeds more rapidly and is deeper than in Gram-negative bacterial mimetic membranes where aggregation is high. Homo-oligomerization is prevented by temporin-L. As to expression, expressed by the skin glands.

The protein localises to the secreted. The protein resides in the target cell membrane. It is found in the target cell. It localises to the target cell cytoplasm. Amphipathic alpha-helical antimicrobial peptide with potent activity against Gram-positive bacteria, weak activity against Gram-negative bacteria, and moderate activity against fungi. Mainly acts by causing membrane permeabilization, but is unable to forme pore-like openings. Is also able to penetrate eukaryotic cells (keratinocytes), and kill intracellular S.aureus (both wild-type and MRSA) without injuring host cells. Shows inhibitory effect on biofilm formation of Gram-positive bacteria, but not of Gram-negative bacteria. Shows antiviral activity against herpes simplex virus 1 (HSV-1) by disrupting the viral envelope. Also displays anti-leishmania activity by damaging parasite membrane. Does not show hemolytic activity. Acts synergistically with temporin-L that improves temporin-1Tb activity by preventing its self-association in lipopolysaccharides (LPS). In vitro, promotes cell migration and wound healing. This chain is Temporin-1Tb, found in Rana temporaria (European common frog).